The following is a 465-amino-acid chain: Myosin-6 (465 aa).

In terms of domain architecture, Myosin motor spans 1 to 35; it reads ILERGDALLVVQWNIRAFTGVKKWPWMELYFEIEP. The stretch at 36-465 forms a coiled coil; that stretch reads LLKSAEAEKE…YRRKLEEAQR (430 aa). 2 positions are modified to phosphoserine: Ser-285 and Ser-334. The residue at position 456 (Tyr-456) is a Phosphotyrosine.

As to quaternary structure, muscle myosin is a hexameric protein that consists of 2 heavy chain subunits (MHC), 2 alkali light chain subunits (MLC) and 2 regulatory light chain subunits (MLC-2).

The protein localises to the cytoplasm. It is found in the myofibril. Functionally, muscle contraction. The polypeptide is Myosin-6 (MYH6) (Oryctolagus cuniculus (Rabbit)).